Consider the following 381-residue polypeptide: Succinyl-diaminopimelate desuccinylase (381 aa).

Residue histidine 70 participates in Zn(2+) binding. The active site involves aspartate 72. Zn(2+) is bound at residue aspartate 103. Glutamate 136 acts as the Proton acceptor in catalysis. Glutamate 137, glutamate 165, and histidine 354 together coordinate Zn(2+).

This sequence belongs to the peptidase M20A family. DapE subfamily. Homodimer. Zn(2+) serves as cofactor. It depends on Co(2+) as a cofactor.

The enzyme catalyses N-succinyl-(2S,6S)-2,6-diaminopimelate + H2O = (2S,6S)-2,6-diaminopimelate + succinate. It participates in amino-acid biosynthesis; L-lysine biosynthesis via DAP pathway; LL-2,6-diaminopimelate from (S)-tetrahydrodipicolinate (succinylase route): step 3/3. Its function is as follows. Catalyzes the hydrolysis of N-succinyl-L,L-diaminopimelic acid (SDAP), forming succinate and LL-2,6-diaminopimelate (DAP), an intermediate involved in the bacterial biosynthesis of lysine and meso-diaminopimelic acid, an essential component of bacterial cell walls. This chain is Succinyl-diaminopimelate desuccinylase, found in Roseobacter denitrificans (strain ATCC 33942 / OCh 114) (Erythrobacter sp. (strain OCh 114)).